Reading from the N-terminus, the 433-residue chain is MRDKISESTQKIFHAVWERIAPFHEMIQSRPAVLSYSGGKDSSILLHFYFWLWIEKKIPAPCIYHLDHSIRFNLEQEKKIFEYADSTFPFSKIFKKKNIPALSRRLGKTLEETGRAFRYKDLKKISDQYEGYIVTGHHSSDYLETILLNLIRGGGWNSLRTLGWYEKNRFRPLFAFSQEEIETILQSEFWKIFEDESNNSDEYLRNRIRSYIIPLLLREGANPDRIYKNFHRIEKPVSKIFSKKNSDHKIPSFLKIDIWVLNDLSQRERKFFIDRYLRSLNLYPTTRNFFRDLTDLLQKENSFSLENKETWFWKSTSSDLYLIPKNSPCLREFRFEPKEMVLKWNGNQKKIPPDLIPDLCPAGAKIRKNGMSIEISEILRQKEIPVPVRKMLPILRGERKVDVICLSLWDPKIGDIVADREVEILPDFQEPGV.

Residue 37–42 (SGGKDS) participates in ATP binding.

This sequence belongs to the tRNA(Ile)-lysidine synthase family.

The protein localises to the cytoplasm. The catalysed reaction is cytidine(34) in tRNA(Ile2) + L-lysine + ATP = lysidine(34) in tRNA(Ile2) + AMP + diphosphate + H(+). Functionally, ligates lysine onto the cytidine present at position 34 of the AUA codon-specific tRNA(Ile) that contains the anticodon CAU, in an ATP-dependent manner. Cytidine is converted to lysidine, thus changing the amino acid specificity of the tRNA from methionine to isoleucine. In Leptospira interrogans serogroup Icterohaemorrhagiae serovar copenhageni (strain Fiocruz L1-130), this protein is tRNA(Ile)-lysidine synthase.